We begin with the raw amino-acid sequence, 529 residues long: GMP synthase [glutamine-hydrolyzing] (529 aa).

The region spanning threonine 3–aspartate 204 is the Glutamine amidotransferase type-1 domain. The active-site Nucleophile is cysteine 87. Active-site residues include histidine 179 and glutamate 181. The 191-residue stretch at tryptophan 205–arginine 395 folds into the GMPS ATP-PPase domain. Serine 232–serine 238 provides a ligand contact to ATP.

In terms of assembly, homodimer.

It carries out the reaction XMP + L-glutamine + ATP + H2O = GMP + L-glutamate + AMP + diphosphate + 2 H(+). It participates in purine metabolism; GMP biosynthesis; GMP from XMP (L-Gln route): step 1/1. In terms of biological role, catalyzes the synthesis of GMP from XMP. The polypeptide is GMP synthase [glutamine-hydrolyzing] (Anaplasma marginale (strain St. Maries)).